Here is a 949-residue protein sequence, read N- to C-terminus: Valine--tRNA ligase (949 aa).

Residues 40–50 (PNVTGSLHMGH) carry the 'HIGH' region motif. The 'KMSKS' region motif lies at 553-557 (KMSKS). Position 556 (Lys556) interacts with ATP. Residues 877-949 (MAGLIDKEAE…QEQQDKIKAL (73 aa)) adopt a coiled-coil conformation.

The protein belongs to the class-I aminoacyl-tRNA synthetase family. ValS type 1 subfamily. Monomer.

The protein localises to the cytoplasm. The enzyme catalyses tRNA(Val) + L-valine + ATP = L-valyl-tRNA(Val) + AMP + diphosphate. Catalyzes the attachment of valine to tRNA(Val). As ValRS can inadvertently accommodate and process structurally similar amino acids such as threonine, to avoid such errors, it has a 'posttransfer' editing activity that hydrolyzes mischarged Thr-tRNA(Val) in a tRNA-dependent manner. This is Valine--tRNA ligase from Idiomarina loihiensis (strain ATCC BAA-735 / DSM 15497 / L2-TR).